We begin with the raw amino-acid sequence, 384 residues long: DNA dC-&gt;dU-editing enzyme APOBEC-3G (384 aa).

Residues 1–60 (MKPHFRNPVERMYQDTFSDNFYNRPILSHRNTVWLCYEVKTKGPSRPPLDAKIFRGQVYS) form an essential for cytoplasmic localization region. CMP/dCMP-type deaminase domains are found at residues 29–138 (HRNT…LRSL) and 214–328 (GRHE…LRTL). At threonine 32 the chain carries Phosphothreonine; by PKA. Histidine 65, cysteine 97, and cysteine 100 together coordinate Zn(2+). Positions 209 to 336 (ELWVRGRHET…TLAKAGAKIS (128 aa)) are necessary for homooligomerization. Residues 213–215 (RGR) are interaction with DNA. Threonine 218 bears the Phosphothreonine; by PKA and CAMK2 mark. Residue histidine 257 coordinates Zn(2+). Glutamate 259 (proton donor) is an active-site residue. Positions 288 and 291 each coordinate Zn(2+). The tract at residues 313 to 320 (RIYDDQGR) is interaction with DNA.

It belongs to the cytidine and deoxycytidylate deaminase family. As to quaternary structure, homodimer. Homooligomer. Can bind RNA to form ribonucleoprotein complexes of high-molecular-mass (HMM) or low-molecular-mass (LMM). HMM is inactive and heterogeneous in protein composition because of binding nonselectively to cellular RNAs, which in turn are associated with variety of cellular proteins. The LMM form which is enzymatically active has few or no RNAs associated. Its ability to form homooligomer is distinct from its ability to assemble into HMM. Interacts with APOBEC3B, APOBEC3F, MOV10, AGO2, EIF4E, EIF4ENIF1, DCP2 and DDX6 in an RNA-dependent manner. Interacts with AGO1, AGO3 and PKA/PRKACA. It depends on Zn(2+) as a cofactor.

It localises to the cytoplasm. The protein resides in the nucleus. The protein localises to the P-body. The catalysed reaction is a 2'-deoxycytidine in single-stranded DNA + H2O + H(+) = a 2'-deoxyuridine in single-stranded DNA + NH4(+). DNA deaminase (cytidine deaminase) which acts as an inhibitor of retrovirus replication and retrotransposon mobility via deaminase-dependent and -independent mechanisms. Exhibits antiviral activity against vif-deficient: HIV-1 and simian immunodeficiency viruses (SIVs) and also against simian foamy virus (SFV). After the penetration of retroviral nucleocapsids into target cells of infection and the initiation of reverse transcription, it can induce the conversion of cytosine to uracil in the minus-sense single-strand viral DNA, leading to G-to-A hypermutations in the subsequent plus-strand viral DNA. The resultant detrimental levels of mutations in the proviral genome, along with a deamination-independent mechanism that works prior to the proviral integration, together exert efficient antiretroviral effects in infected target cells. Selectively targets single-stranded DNA and does not deaminate double-stranded DNA or single- or double-stranded RNA. May inhibit the mobility of LTR retrotransposons. In Pan troglodytes (Chimpanzee), this protein is DNA dC-&gt;dU-editing enzyme APOBEC-3G (APOBEC3G).